We begin with the raw amino-acid sequence, 428 residues long: Inward rectifier potassium channel 2 (428 aa).

Residues 1–81 (MGSVRTNRYS…IFTTCVDIRW (81 aa)) lie on the Cytoplasmic side of the membrane. Position 76 is an S-nitrosocysteine (cysteine 76). Residues 82–106 (RWMLVIFCLAFVLSWLFFGCVFWLI) form a helical membrane-spanning segment. Topologically, residues 107-128 (ALLHGDLDTSKVSKACVSEVNS) are extracellular. Positions 129–140 (FTAAFLFSIETQ) form an intramembrane region, helical; Pore-forming. The segment at residues 141–147 (TTIGYGF) is an intramembrane region (pore-forming). The Selectivity filter motif lies at 142 to 147 (TIGYGF). The Extracellular segment spans residues 148–156 (RCVTDECPI). A helical membrane pass occupies residues 157–178 (AVFMVVFQSIVGCIIDAFIIGA). The Cytoplasmic portion of the chain corresponds to 179–428 (VMAKMAKPKK…PRPLRRESEI (250 aa)). Residues 181–208 (AKMAKPKKRNETLVFSHNAVIAMRDGKL) form a polyphosphoinositide (PIP2)-binding region. The disordered stretch occupies residues 383 to 428 (TSKEEEEDSENGVPESTSTDSPPGIDLHNQASVPLEPRPLRRESEI). The PDZ-binding signature appears at 426–428 (SEI).

This sequence belongs to the inward rectifier-type potassium channel (TC 1.A.2.1) family. KCNJ2 subfamily. As to quaternary structure, homotetramer. Homomultimeric and heteromultimeric association with KCNJ4/Kir2.3. Can form heteromeric channels with Kir2.6/KCNJ18. Associates, via its PDZ-recognition domain, with a complex containing LIN7A, LIN7B, LIN7C, DLG1, CASK and APBA1. Post-translationally, S-nitrosylation increases the open probability and inward rectifying currents. In terms of tissue distribution, prominently expressed in the central nervous system. Also found in other excitable tissues such as heart and skeletal muscle.

Its subcellular location is the cell membrane. The protein localises to the sarcolemma. It localises to the T-tubule. The catalysed reaction is K(+)(in) = K(+)(out). Activated by phosphatidylinositol 4,5 biphosphate (PtdIns(4,5)P2). Inward rectifier potassium channels are characterized by a greater tendency to allow potassium to flow into the cell rather than out of it. Their voltage dependence is regulated by the concentration of extracellular potassium; as external potassium is raised, the voltage range of the channel opening shifts to more positive voltages. The inward rectification is mainly due to the blockage of outward current by internal magnesium. Can be blocked by extracellular barium and cesium. Probably participates in establishing action potential waveform and excitability of neuronal and muscle tissues. This Mus musculus (Mouse) protein is Inward rectifier potassium channel 2 (Kcnj2).